A 130-amino-acid polypeptide reads, in one-letter code: 3-aminoacrylate deaminase RutC (130 aa).

It belongs to the RutC family.

It catalyses the reaction (Z)-3-aminoacrylate + H2O + H(+) = 3-oxopropanoate + NH4(+). Functionally, involved in pyrimidine catabolism. Catalyzes the deamination of 3-aminoacrylate to malonic semialdehyde, a reaction that can also occur spontaneously. RutC may facilitate the reaction and modulate the metabolic fitness, rather than catalyzing essential functions. The sequence is that of 3-aminoacrylate deaminase RutC from Klebsiella pneumoniae (strain 342).